A 695-amino-acid polypeptide reads, in one-letter code: Follicle-stimulating hormone receptor (695 aa).

The signal sequence occupies residues 1 to 17 (MALLLVSLLAFMSLGSG). 2 cysteine pairs are disulfide-bonded: Cys18-Cys25 and Cys23-Cys32. One can recognise an LRRNT domain in the interval 18-46 (CHHRLCHCSNRVFLCQESKVTEIPSDLPR). Residues 18–366 (CHHRLCHCSN…EDIMGYNILR (349 aa)) lie on the Extracellular side of the membrane. LRR repeat units lie at residues 49–72 (VELRFVLTKLRVIPKGAFSGFGDL), 73–97 (EKIEISQNDALEVIEADVFSNLPNL), 98–118 (HEIRIEKANNLLYINPEAFQN), 119–143 (LPNLRYLLISNTGIRHLPAVHKIQS), 144–169 (LQKVLLDIQDNINIHTVERNSFLGLS), 170–192 (SESVILRLNKNGIQEIQNCAFNG), 193–216 (TQLDDLNLSDNDNLEELPNGVFQG), 217–240 (ASGPVILDISRTRINSLPSHGLEN), and 241–259 (LKKLRARSTYNLKKLPSLE). N-linked (GlcNAc...) asparagine glycosylation is found at Asn191 and Asn199. 4 disulfide bridges follow: Cys275-Cys346, Cys276-Cys292, Cys276-Cys356, and Cys292-Cys338. Asn293 is a glycosylation site (N-linked (GlcNAc...) asparagine). The residue at position 335 (Tyr335) is a Sulfotyrosine. A helical transmembrane segment spans residues 367–387 (VLIWFISILAITGNVAVLVVL). At 388–398 (TTSQYKLTVPR) the chain is on the cytoplasmic side. A helical membrane pass occupies residues 399-421 (FLMCNLAFADLCIGIYLLLIASV). At 422-443 (DVHTRTLYHNYAIDWQTGAGCA) the chain is on the extracellular side. Cysteines 442 and 517 form a disulfide. A helical membrane pass occupies residues 444–465 (DCWLFTVFASELSVYTLTAITL). At 466 to 485 (ERWHTITHAMQLDCKVQLRH) the chain is on the cytoplasmic side. A helical transmembrane segment spans residues 486-508 (AASIMVIGWIFSSAAALFPIFGV). At 509 to 528 (SSYMKVSICLPMDIDSPLSQ) the chain is on the extracellular side. The helical transmembrane segment at 529-550 (LYVMFLLVLNVLAFVVICGCYL) threads the bilayer. Residues 551–573 (HIYLTVRNPNIVSSASDTRIAKR) lie on the Cytoplasmic side of the membrane. Residues 574-597 (MATLIFTDFLCMAPISFFAISASL) traverse the membrane as a helical segment. The Extracellular portion of the chain corresponds to 598 to 608 (KVPLITVSKAK). A helical membrane pass occupies residues 609-630 (ILLVLFYPINSCANPFLYAIFT). The Cytoplasmic segment spans residues 631–695 (KNFRRDLFIL…LAPLNHLAQN (65 aa)). The disordered stretch occupies residues 658 to 677 (TSSTAHNSHPRNGHSSSVSR).

This sequence belongs to the G-protein coupled receptor 1 family. FSH/LSH/TSH subfamily. In terms of assembly, homotrimer. Functions as a homotrimer binding the FSH hormone heterodimer composed of CGA and FSHB. Interacts with ARRB2. Interacts with APPL2; interaction is independent of follicle stimulating hormone stimulation. N-glycosylated; indirectly required for FSH-binding, possibly via a conformational change that allows high affinity binding of hormone. Post-translationally, sulfated.

It is found in the cell membrane. Functionally, g protein-coupled receptor for follitropin, the follicle-stimulating hormone. Through cAMP production activates the downstream PI3K-AKT and ERK1/ERK2 signaling pathways. In Cavia porcellus (Guinea pig), this protein is Follicle-stimulating hormone receptor (FSHR).